The primary structure comprises 1022 residues: Protein translocase subunit SECA1, chloroplastic (1022 aa).

The transit peptide at 1–72 directs the protein to the chloroplast; that stretch reads MVSPLCDSQL…SRKRSTSVNA (72 aa). An N-acetylserine modification is found at Ser-73. Residue 176–183 participates in ATP binding; it reads MRTGEGKT. Residues 985–1022 form a disordered region; it reads KDEEKKSQNGKPSKQVDNASEKPKQVGVTDEPSSIASA. Residues 993-1002 show a composition bias toward polar residues; the sequence is NGKPSKQVDN.

This sequence belongs to the SecA family. As to quaternary structure, part of the Sec protein translocation apparatus. Interacts probably with SCY1. As to expression, expressed in green tissues, including cotyledons, rosette and cauline leaves, and sepals. Also detected at the base and the tip of the trichome.

The protein localises to the plastid. The protein resides in the chloroplast stroma. It is found in the chloroplast thylakoid membrane. The enzyme catalyses ATP + H2O + chloroplast-proteinSide 1 = ADP + phosphate + chloroplast-proteinSide 2.. Has a central role in coupling the hydrolysis of ATP to the transfer of proteins across the thylakoid membrane. Involved in photosynthetic acclimation and required for chloroplast biogenesis. The chain is Protein translocase subunit SECA1, chloroplastic from Arabidopsis thaliana (Mouse-ear cress).